A 549-amino-acid chain; its full sequence is Serine/threonine-protein phosphatase PPQ (549 aa).

Positions 1–13 are enriched in polar residues; it reads MRRSPSRSNNNFA. Disordered stretches follow at residues 1 to 50, 64 to 85, 133 to 158, and 189 to 219; these read MRRS…RSLP, YNTL…DNLL, TSST…NYSS, and SRVK…PKSS. Composition is skewed to low complexity over residues 16–32 and 68–83; these read NCST…TTPS and ASAG…SNDN. Residues 205–217 show a composition bias toward polar residues; the sequence is APSSPTSGIPNPK. Mn(2+) is bound by residues Asp301, His303, Asp329, and Asn361. His362 serves as the catalytic Proton donor. Mn(2+) is bound by residues His410 and His485.

Belongs to the PPP phosphatase family. PP-Z subfamily. The cofactor is Mn(2+).

The catalysed reaction is O-phospho-L-seryl-[protein] + H2O = L-seryl-[protein] + phosphate. It catalyses the reaction O-phospho-L-threonyl-[protein] + H2O = L-threonyl-[protein] + phosphate. In terms of biological role, phosphatase involved in the regulation of protein synthesis. Affects translational accuracy. This Saccharomyces cerevisiae (strain ATCC 204508 / S288c) (Baker's yeast) protein is Serine/threonine-protein phosphatase PPQ (PPQ1).